A 213-amino-acid chain; its full sequence is Endonuclease III (213 aa).

The HhH domain occupies Leu101–Trp120. [4Fe-4S] cluster is bound by residues Cys180, Cys187, Cys190, and Cys196.

This sequence belongs to the Nth/MutY family. [4Fe-4S] cluster serves as cofactor.

It catalyses the reaction 2'-deoxyribonucleotide-(2'-deoxyribose 5'-phosphate)-2'-deoxyribonucleotide-DNA = a 3'-end 2'-deoxyribonucleotide-(2,3-dehydro-2,3-deoxyribose 5'-phosphate)-DNA + a 5'-end 5'-phospho-2'-deoxyribonucleoside-DNA + H(+). DNA repair enzyme that has both DNA N-glycosylase activity and AP-lyase activity. The DNA N-glycosylase activity releases various damaged pyrimidines from DNA by cleaving the N-glycosidic bond, leaving an AP (apurinic/apyrimidinic) site. The AP-lyase activity cleaves the phosphodiester bond 3' to the AP site by a beta-elimination, leaving a 3'-terminal unsaturated sugar and a product with a terminal 5'-phosphate. The polypeptide is Endonuclease III (Thermotoga maritima (strain ATCC 43589 / DSM 3109 / JCM 10099 / NBRC 100826 / MSB8)).